A 204-amino-acid chain; its full sequence is Pyrrolidone-carboxylate peptidase (204 aa).

Catalysis depends on residues Glu-78, Cys-141, and His-165.

This sequence belongs to the peptidase C15 family. In terms of assembly, homotetramer.

Its subcellular location is the cytoplasm. It carries out the reaction Release of an N-terminal pyroglutamyl group from a polypeptide, the second amino acid generally not being Pro.. In terms of biological role, removes 5-oxoproline from various penultimate amino acid residues except L-proline. The sequence is that of Pyrrolidone-carboxylate peptidase from Levilactobacillus brevis (strain ATCC 367 / BCRC 12310 / CIP 105137 / JCM 1170 / LMG 11437 / NCIMB 947 / NCTC 947) (Lactobacillus brevis).